The primary structure comprises 1007 residues: Probable inorganic carbon transporter subunit DabA (1007 aa).

4 residues coordinate Zn(2+): C442, D444, H696, and C711.

Belongs to the inorganic carbon transporter (TC 9.A.2) DabA family. Forms a complex with DabB. The cofactor is Zn(2+).

The protein resides in the cell inner membrane. In terms of biological role, part of an energy-coupled inorganic carbon pump. The polypeptide is Probable inorganic carbon transporter subunit DabA (Aquifex aeolicus (strain VF5)).